The sequence spans 227 residues: Cytochrome c oxidase subunit 2 (227 aa).

Over 1-14 the chain is Mitochondrial intermembrane; it reads MAHAAQVGLQDATS. Residues 15–45 form a helical membrane-spanning segment; that stretch reads PIMEELVIFHDHALMIIFLICFLVLYALFLT. Over 46-59 the chain is Mitochondrial matrix; the sequence is LTTKLTNTSISDAQ. Residues 60-87 traverse the membrane as a helical segment; that stretch reads EMETIWTILPAIILILIALPSLRILYLT. Residues 88–227 lie on the Mitochondrial intermembrane side of the membrane; that stretch reads DEINDPSFTI…IFEMGPVFTL (140 aa). The Cu cation site is built by H161, C196, E198, C200, H204, and M207. Position 198 (E198) interacts with Mg(2+).

It belongs to the cytochrome c oxidase subunit 2 family. In terms of assembly, component of the cytochrome c oxidase (complex IV, CIV), a multisubunit enzyme composed of 14 subunits. The complex is composed of a catalytic core of 3 subunits MT-CO1, MT-CO2 and MT-CO3, encoded in the mitochondrial DNA, and 11 supernumerary subunits COX4I, COX5A, COX5B, COX6A, COX6B, COX6C, COX7A, COX7B, COX7C, COX8 and NDUFA4, which are encoded in the nuclear genome. The complex exists as a monomer or a dimer and forms supercomplexes (SCs) in the inner mitochondrial membrane with NADH-ubiquinone oxidoreductase (complex I, CI) and ubiquinol-cytochrome c oxidoreductase (cytochrome b-c1 complex, complex III, CIII), resulting in different assemblies (supercomplex SCI(1)III(2)IV(1) and megacomplex MCI(2)III(2)IV(2)). Found in a complex with TMEM177, COA6, COX18, COX20, SCO1 and SCO2. Interacts with TMEM177 in a COX20-dependent manner. Interacts with COX20. Interacts with COX16. Cu cation is required as a cofactor.

It localises to the mitochondrion inner membrane. It catalyses the reaction 4 Fe(II)-[cytochrome c] + O2 + 8 H(+)(in) = 4 Fe(III)-[cytochrome c] + 2 H2O + 4 H(+)(out). Component of the cytochrome c oxidase, the last enzyme in the mitochondrial electron transport chain which drives oxidative phosphorylation. The respiratory chain contains 3 multisubunit complexes succinate dehydrogenase (complex II, CII), ubiquinol-cytochrome c oxidoreductase (cytochrome b-c1 complex, complex III, CIII) and cytochrome c oxidase (complex IV, CIV), that cooperate to transfer electrons derived from NADH and succinate to molecular oxygen, creating an electrochemical gradient over the inner membrane that drives transmembrane transport and the ATP synthase. Cytochrome c oxidase is the component of the respiratory chain that catalyzes the reduction of oxygen to water. Electrons originating from reduced cytochrome c in the intermembrane space (IMS) are transferred via the dinuclear copper A center (CU(A)) of subunit 2 and heme A of subunit 1 to the active site in subunit 1, a binuclear center (BNC) formed by heme A3 and copper B (CU(B)). The BNC reduces molecular oxygen to 2 water molecules using 4 electrons from cytochrome c in the IMS and 4 protons from the mitochondrial matrix. The chain is Cytochrome c oxidase subunit 2 (MT-CO2) from Pongo abelii (Sumatran orangutan).